The chain runs to 190 residues: Somatotropin (190 aa).

His-19 serves as a coordination point for Zn(2+). A disulfide bond links Cys-52 and Cys-163. Ser-105 is subject to Phosphoserine. Glu-172 provides a ligand contact to Zn(2+). Residues Cys-180 and Cys-188 are joined by a disulfide bond.

It belongs to the somatotropin/prolactin family.

It is found in the secreted. Functionally, plays an important role in growth control. Its major role in stimulating body growth is to stimulate the liver and other tissues to secrete IGF1. It stimulates both the differentiation and proliferation of myoblasts. It also stimulates amino acid uptake and protein synthesis in muscle and other tissues. This chain is Somatotropin (GH1), found in Balaenoptera borealis (Sei whale).